The chain runs to 726 residues: L-lysine 6-oxidase (726 aa).

A cross-link (4'-cysteinyl-tryptophylquinone (Cys-Trp)) is located at residues 516–581 (CTIQTVNFSE…LPPAYYSYWW (66 aa)). Tryptophylquinone is present on W581.

Homotetramer. Cysteine tryptophylquinone residue serves as cofactor. In terms of processing, the cysteine tryptophylquinone (CTQ) is generated by oxidation of the indole ring of a tryptophan residue to form tryptophylquinone, followed by covalent cross-linking with a cysteine residue.

Its subcellular location is the secreted. It carries out the reaction L-lysine + O2 + H2O = (S)-2-amino-6-oxohexanoate + H2O2 + NH4(+). Inhibited by aminoguanidine, amiloride and beta-aminopropionitrile. In terms of biological role, has antibacterial activity against a wide spectrum of Gram-positive and Gram-negative bacteria including nosocomial isolates of S.aureus and Pseudomonas sp. The antimicrobial activity is due to hydrogen peroxide generated by its lysine oxidase activity. Also has autotoxic activity. Involved in biofilm differentiation; responsible for cell death within microcolonies during biofilm development which is linked to the generation of a phenotypically diverse dispersal population and thus may play a role in colonization. The protein is L-lysine 6-oxidase (lodA) of Marinomonas mediterranea (strain ATCC 700492 / JCM 21426 / NBRC 103028 / MMB-1).